The sequence spans 189 residues: GTP cyclohydrolase 1 (189 aa).

Zn(2+) contacts are provided by Cys78, His81, and Cys150.

The protein belongs to the GTP cyclohydrolase I family. As to quaternary structure, homomer.

It catalyses the reaction GTP + H2O = 7,8-dihydroneopterin 3'-triphosphate + formate + H(+). Its pathway is cofactor biosynthesis; 7,8-dihydroneopterin triphosphate biosynthesis; 7,8-dihydroneopterin triphosphate from GTP: step 1/1. The sequence is that of GTP cyclohydrolase 1 from Bacillus mycoides (strain KBAB4) (Bacillus weihenstephanensis).